The following is a 243-amino-acid chain: Orotidine 5'-phosphate decarboxylase (243 aa).

Substrate-binding positions include D19, K41, 69–78 (DLKFFDIPAT), T124, R185, Q194, G214, and R215. The active-site Proton donor is K71.

It belongs to the OMP decarboxylase family. Type 1 subfamily. As to quaternary structure, homodimer.

The enzyme catalyses orotidine 5'-phosphate + H(+) = UMP + CO2. Its pathway is pyrimidine metabolism; UMP biosynthesis via de novo pathway; UMP from orotate: step 2/2. Catalyzes the decarboxylation of orotidine 5'-monophosphate (OMP) to uridine 5'-monophosphate (UMP). This is Orotidine 5'-phosphate decarboxylase from Xanthomonas oryzae pv. oryzae (strain MAFF 311018).